The following is a 123-amino-acid chain: Small ribosomal subunit protein uS12 (123 aa).

D89 is subject to 3-methylthioaspartic acid. Residues 104 to 123 are disordered; that stretch reads SVGVKDRKKSRSKYGAKRPK. The segment covering 109–123 has biased composition (basic residues); sequence DRKKSRSKYGAKRPK.

This sequence belongs to the universal ribosomal protein uS12 family. Part of the 30S ribosomal subunit. Contacts proteins S8 and S17. May interact with IF1 in the 30S initiation complex.

Functionally, with S4 and S5 plays an important role in translational accuracy. Its function is as follows. Interacts with and stabilizes bases of the 16S rRNA that are involved in tRNA selection in the A site and with the mRNA backbone. Located at the interface of the 30S and 50S subunits, it traverses the body of the 30S subunit contacting proteins on the other side and probably holding the rRNA structure together. The combined cluster of proteins S8, S12 and S17 appears to hold together the shoulder and platform of the 30S subunit. The polypeptide is Small ribosomal subunit protein uS12 (Geotalea daltonii (strain DSM 22248 / JCM 15807 / FRC-32) (Geobacter daltonii)).